A 316-amino-acid polypeptide reads, in one-letter code: PAK4-inhibitor inka2 (316 aa).

Disordered stretches follow at residues 43 to 74 (RSSP…SHRT) and 108 to 130 (YSEV…ESET). Residues 65 to 74 (RRDNRISHRT) are compositionally biased toward basic and acidic residues. A compositionally biased stretch (acidic residues) spans 119–129 (EEDDIVEEESE). Residues 182–219 (DSQDWTGCLLSQSRSRQPLVLGDNSFADLVKQWMDLPE) are inka box.

It belongs to the INKA family.

Its subcellular location is the nucleus. In terms of biological role, inhibitor of the serine/threonine-protein kinase pak4/pak5. Acts by binding pak4/pak5 in a substrate-like manner, inhibiting the protein kinase activity. This is PAK4-inhibitor inka2 from Xenopus laevis (African clawed frog).